A 1336-amino-acid chain; its full sequence is Misshapen-like kinase 1 (1336 aa).

In terms of domain architecture, Protein kinase spans 25 to 289; it reads FELVEVVGNG…TEQLLKFPFI (265 aa). Residues 31–39 and Lys54 contribute to the ATP site; that span reads VGNGTYGQV. Residue Asp153 is the Proton acceptor of the active site. Disordered regions lie at residues 299–347, 363–383, and 395–890; these read RIQL…NVPG, KSNS…QRDP, and QRRI…GGTM. The span at 317–333 shows a compositional bias: acidic residues; sequence EETEYEYSGSEEEDDSH. A phosphoserine mark is found at Ser324 and Ser326. Over residues 371–380 the composition is skewed to low complexity; sequence QQQQLQQQQQ. Positions 396 to 466 are enriched in basic and acidic residues; it reads RRIEEQKEER…EEQRQSERLQ (71 aa). The segment covering 479 to 496 has biased composition (low complexity); that stretch reads QKQQQQQQQQQQQQQQQQ. Residues Arg502 and Arg510 each carry the omega-N-methylarginine modification. A compositionally biased stretch (basic and acidic residues) spans 519-529; the sequence is AWAREVEERAR. Polar residues predominate over residues 531-544; it reads NKQQNSPLAKTKPS. Pro residues predominate over residues 548 to 562; that stretch reads PEPPIPQASPSPPGP. A compositionally biased stretch (polar residues) spans 599–609; it reads RSQSLQDQPTR. Residues 622–632 show a composition bias toward low complexity; the sequence is PAAVPTPTATP. Residue Ser643 is modified to Phosphoserine. Residues 672–684 are compositionally biased toward polar residues; it reads QRTSSIATALNTS. Position 703 is a phosphoserine (Ser703). The segment covering 718–731 has biased composition (pro residues); that stretch reads PKPPGPPAQPPGPP. Basic and acidic residues predominate over residues 738-750; sequence DLRRSDPGWERSD. Residues Ser756, Ser765, Ser781, Ser782, and Ser786 each carry the phosphoserine modification. Residues 808–825 show a composition bias toward basic and acidic residues; sequence LLKERTLDEAPKPPKKAM. Acidic residues predominate over residues 832–848; sequence EEVESSEDEEEEGDGEP. A mediates interaction with RAP2A region spans residues 870–1336; the sequence is MVVHDVEEVS…TLNRNCIMNW (467 aa). Thr895 is subject to Phosphothreonine. The tract at residues 909-946 is disordered; sequence GYTNLPDVVQPSHSPTENSQGQSPPTKDGGGDYQSRGL. Over residues 919–933 the composition is skewed to polar residues; that stretch reads PSHSPTENSQGQSPP. The CNH domain maps to 1023–1310; the sequence is NSEILCAALW…KFLCERNDKV (288 aa).

Belongs to the protein kinase superfamily. STE Ser/Thr protein kinase family. STE20 subfamily. As to quaternary structure, interacts with RAP2A and NCK1. Interacts with TANC1. It depends on Mg(2+) as a cofactor. Autophosphorylated.

The protein resides in the cytoplasm. The protein localises to the postsynaptic density. Its subcellular location is the cell projection. It localises to the axon. It is found in the dendrite. The catalysed reaction is L-seryl-[protein] + ATP = O-phospho-L-seryl-[protein] + ADP + H(+). It carries out the reaction L-threonyl-[protein] + ATP = O-phospho-L-threonyl-[protein] + ADP + H(+). Functionally, serine/threonine kinase which acts as a negative regulator of Ras-related Rap2-mediated signal transduction to control neuronal structure and AMPA receptor trafficking. Required for normal synaptic density, dendrite complexity, as well as surface AMPA receptor expression in hippocampal neurons. Can activate the JNK and MAPK14/p38 pathways and mediates stimulation of the stress-activated protein kinase MAPK14/p38 MAPK downstream of the Raf/ERK pathway. Phosphorylates TANC1 upon stimulation by RAP2A, MBP and SMAD1. Has an essential function in negative selection of thymocytes, perhaps by coupling NCK1 to activation of JNK1. Activator of the Hippo signaling pathway which plays a pivotal role in organ size control and tumor suppression by restricting proliferation and promoting apoptosis. MAP4Ks act in parallel to and are partially redundant with STK3/MST2 and STK4/MST2 in the phosphorylation and activation of LATS1/2, and establish MAP4Ks as components of the expanded Hippo pathway. The chain is Misshapen-like kinase 1 (Mink1) from Rattus norvegicus (Rat).